The sequence spans 884 residues: Receptor-like protein 39 (884 aa).

Residues Met1–Ser24 form the signal peptide. Over Phe25–Lys847 the chain is Extracellular. Asn59, Asn71, and Asn92 each carry an N-linked (GlcNAc...) asparagine glycan. LRR repeat units lie at residues Phe98–Met122, Asn124–Asn146, Leu147–Leu170, Arg171–Leu196, His197–Lys223, Glu225–Leu245, Thr246–Leu268, Thr269–Met292, Phe294–Ser318, and Leu320–Leu344. Asn146 is a glycosylation site (N-linked (GlcNAc...) asparagine). 4 N-linked (GlcNAc...) asparagine glycosylation sites follow: Asn190, Asn208, Asn244, and Asn267. Asn304 and Asn313 each carry an N-linked (GlcNAc...) asparagine glycan. An LRR 11; degenerate repeat occupies Lys345–Ser365. Asn353 carries an N-linked (GlcNAc...) asparagine glycan. 5 LRR repeats span residues Leu366–Pro391, Ser392–Thr413, Leu414–Leu438, Arg440–Asn463, and Ser464–Val487. An N-linked (GlcNAc...) asparagine glycan is attached at Asn403. Asn463 carries an N-linked (GlcNAc...) asparagine glycan. Residues Asn488–Ser507 form an LRR 17; degenerate repeat. LRR repeat units lie at residues Arg508–Pro529, Ser530–Asp553, Ala554–Cys577, Ala579–Leu601, Pro602–Ser625, Phe628–Asn652, Ser702–Leu725, Lys726–Leu749, Lys750–Leu773, and Phe775–Gly798. Residue Asn520 is glycosylated (N-linked (GlcNAc...) asparagine). N-linked (GlcNAc...) asparagine glycosylation occurs at Asn576. Asn732 is a glycosylation site (N-linked (GlcNAc...) asparagine). Asn780 carries N-linked (GlcNAc...) asparagine glycosylation. Residues Gly848–Ala868 form a helical membrane-spanning segment. The Cytoplasmic segment spans residues Ser869 to His884.

Belongs to the RLP family.

It localises to the cell membrane. The protein is Receptor-like protein 39 of Arabidopsis thaliana (Mouse-ear cress).